A 363-amino-acid chain; its full sequence is Chorismate synthase (363 aa).

Residues arginine 48 and arginine 54 each contribute to the NADP(+) site. Residues 125–127 (RSS), 238–239 (NA), glycine 278, 293–297 (KPTSS), and arginine 319 each bind FMN.

Belongs to the chorismate synthase family. As to quaternary structure, homotetramer. It depends on FMNH2 as a cofactor.

The enzyme catalyses 5-O-(1-carboxyvinyl)-3-phosphoshikimate = chorismate + phosphate. It functions in the pathway metabolic intermediate biosynthesis; chorismate biosynthesis; chorismate from D-erythrose 4-phosphate and phosphoenolpyruvate: step 7/7. Its function is as follows. Catalyzes the anti-1,4-elimination of the C-3 phosphate and the C-6 proR hydrogen from 5-enolpyruvylshikimate-3-phosphate (EPSP) to yield chorismate, which is the branch point compound that serves as the starting substrate for the three terminal pathways of aromatic amino acid biosynthesis. This reaction introduces a second double bond into the aromatic ring system. This is Chorismate synthase from Alcanivorax borkumensis (strain ATCC 700651 / DSM 11573 / NCIMB 13689 / SK2).